A 359-amino-acid chain; its full sequence is Mitochondrial calcium uniporter regulator 1 (359 aa).

Residues 1 to 68 (MDCGSVGGQR…ARGGVSRASP (68 aa)) are Mitochondrial intermembrane-facing. Residues 69–85 (LLLLLLVPSPRLAAAAP) traverse the membrane as a helical segment. The Mitochondrial matrix segment spans residues 86–338 (RRQLGDWERS…LESHKLDNIK (253 aa)). Residues 235 to 310 (EKSEFSALRA…VALHAQQDRA (76 aa)) are a coiled coil. A helical membrane pass occupies residues 339–358 (YLAGSIFTCLTVALGFYRLW). Ile359 is a topological domain (mitochondrial intermembrane).

This sequence belongs to the CCDC90 family. As to quaternary structure, interacts (via coiled coil regions) with MCU; the interaction is direct. Interacts with SMDT1/EMRE; the interaction is direct. Interacts with PPIF. In terms of tissue distribution, ubiquitously expressed.

The protein resides in the mitochondrion inner membrane. Its function is as follows. Key regulator of mitochondrial calcium uniporter (MCU) required for calcium entry into mitochondrion. Plays a direct role in uniporter-mediated calcium uptake via a direct interaction with MCU. Probably involved in the assembly of the membrane components of the uniporter complex (uniplex). The polypeptide is Mitochondrial calcium uniporter regulator 1 (Homo sapiens (Human)).